Here is a 648-residue protein sequence, read N- to C-terminus: Interferon-induced GTP-binding protein Mx1 (648 aa).

Met1 carries the post-translational modification N-acetylmethionine. The segment at 1–26 is disordered; the sequence is MVHSDLGIEELDSPESSLNGSEDMES. Positions 56-329 constitute a Dynamin-type G domain; the sequence is DLALPAIAVI…LIMHICKTLP (274 aa). A G1 motif region spans residues 66-73; that stretch reads GDQSSGKS. 66–73 serves as a coordination point for GTP; that stretch reads GDQSSGKS. The segment at 91–93 is G2 motif; the sequence is VTR. The tract at residues 167–170 is G3 motif; the sequence is DLPG. Residues 167 to 171 and 236 to 239 each bind GTP; these read DLPGI and TKPD. Residues 236–239 form a G4 motif region; the sequence is TKPD. The segment at 268 to 271 is G5 motif; the sequence is KCRG. The interval 330–355 is bundle signaling element (BSE); it reads LLENQIKETHQRITEELQKYGKDIPE. The segment at 355 to 522 is middle domain; that stretch reads EEESEKMFCL…HFQMEQLVYC (168 aa). Residues 356 to 618 form a stalk region; sequence EESEKMFCLI…KDQYDWLLKE (263 aa). Residues 543-546 are critical for lipid-binding; that stretch reads KNKK. The region spanning 560-648 is the GED domain; the sequence is TDEIFQHLTA…ARQRLAKFPG (89 aa).

This sequence belongs to the TRAFAC class dynamin-like GTPase superfamily. Dynamin/Fzo/YdjA family. As to quaternary structure, homooligomer. Oligomerizes into multimeric filamentous or ring-like structures by virtue of its stalk domain. Oligomerization is critical for GTPase activity, protein stability, and recognition of viral target structures. Interacts with TRPC1, TRPC3, TRPC4, TRPC5, TRPC6 and TRPC7. Interacts with HSPA5. Interacts with TUBB/TUBB5. Interacts with DDX39A and DDX39B. In terms of processing, ISGylated. As to expression, ubiquitously expressed.

The protein localises to the cytoplasm. It is found in the endoplasmic reticulum membrane. The protein resides in the perinuclear region. It localises to the nucleus. In terms of biological role, interferon-induced dynamin-like GTPase with antiviral activity against rabies virus (RABV), vesicular stomatitis virus (VSV) and murine pneumonia virus (MPV). Isoform 1 but not isoform 2 shows antiviral activity against vesicular stomatitis virus (VSV). The protein is Interferon-induced GTP-binding protein Mx1 (MX1) of Bos taurus (Bovine).